Here is a 348-residue protein sequence, read N- to C-terminus: Myricetin O-methyltransferase (348 aa).

An N-acetylmethionine modification is found at Met-1. Positions 189, 212, 232, 233, and 246 each coordinate S-adenosyl-L-methionine. His-250 functions as the Proton acceptor in the catalytic mechanism.

Post-translationally, the N-terminus is blocked.

It catalyses the reaction S-adenosyl-L-methionine + a 3'-hydroxyflavonoid = S-adenosyl-L-homocysteine + a 3'-methoxyflavonoid.. It carries out the reaction S-adenosyl-L-methionine + a 5'-hydroxy-3'-methoxyflavonoid = S-adenosyl-L-homocysteine + a 3',5'-dimethoxyflavonoid.. Its function is as follows. Methylates myricetin and dihydromyricetin at 2 sites. Inactive towards 16-hydroxytabersonine, the phenylpropanoids 5-hydroxyferulate, caffeate and their CoA-esters, flavones and flavanones possessing 2 or 3 B-ring hydroxyl groups. The chain is Myricetin O-methyltransferase from Catharanthus roseus (Madagascar periwinkle).